The following is a 288-amino-acid chain: Phenazine biosynthesis-like domain-containing protein (288 aa).

Residue glutamate 46 is part of the active site.

Belongs to the PhzF family. In terms of assembly, interacts with UNRIP/MAWD.

The chain is Phenazine biosynthesis-like domain-containing protein (Pbld) from Rattus norvegicus (Rat).